The chain runs to 447 residues: Tol-Pal system protein TolB (447 aa).

An N-terminal signal peptide occupies residues 1–34 (MSSRLPALPLSRRQALLGGAGSAAALLLPGGAQA). The disordered stretch occupies residues 426–447 (RNEQKVPTPGFASDPAWSPLLS).

Belongs to the TolB family. The Tol-Pal system is composed of five core proteins: the inner membrane proteins TolA, TolQ and TolR, the periplasmic protein TolB and the outer membrane protein Pal. They form a network linking the inner and outer membranes and the peptidoglycan layer.

It localises to the periplasm. Part of the Tol-Pal system, which plays a role in outer membrane invagination during cell division and is important for maintaining outer membrane integrity. In Rhodopseudomonas palustris (strain BisB18), this protein is Tol-Pal system protein TolB.